A 449-amino-acid chain; its full sequence is Na(+)/H(+) antiporter NhaA 1 (449 aa).

The next 11 helical transmembrane spans lie at 32–52, 87–107, 114–134, 145–165, 174–194, 202–222, 233–253, 318–338, 347–367, 382–402, and 417–437; these read IEATSGAVLLLATVVALTLSN, GLMTLFFFIVALEIKREVVLG, MVAFSVVAAAGGMLVPMGLYL, GWGVVMPTDTAFVIGCLALLG, VFLLSLAVVDDLAAILVVAVG, TALALGAVGLVIIRGMALLGV, AIIWLAVNASGIHATIVGVIL, WVAFGVMPLFALANAGVSITI, LAVMAGFVLGKPIGVTAFAWL, WGGLVGGALLTGIGFTMALFI, and LGILAASVVSSVAGLTLLCMF.

It belongs to the NhaA Na(+)/H(+) (TC 2.A.33) antiporter family.

It is found in the cell inner membrane. The enzyme catalyses Na(+)(in) + 2 H(+)(out) = Na(+)(out) + 2 H(+)(in). In terms of biological role, na(+)/H(+) antiporter that extrudes sodium in exchange for external protons. The sequence is that of Na(+)/H(+) antiporter NhaA 1 from Acidiphilium cryptum (strain JF-5).